The chain runs to 145 residues: D-aminoacyl-tRNA deacylase (145 aa).

The Gly-cisPro motif, important for rejection of L-amino acids motif lies at Gly-137–Pro-138.

This sequence belongs to the DTD family. As to quaternary structure, homodimer.

It is found in the cytoplasm. It carries out the reaction glycyl-tRNA(Ala) + H2O = tRNA(Ala) + glycine + H(+). The enzyme catalyses a D-aminoacyl-tRNA + H2O = a tRNA + a D-alpha-amino acid + H(+). Functionally, an aminoacyl-tRNA editing enzyme that deacylates mischarged D-aminoacyl-tRNAs. Also deacylates mischarged glycyl-tRNA(Ala), protecting cells against glycine mischarging by AlaRS. Acts via tRNA-based rather than protein-based catalysis; rejects L-amino acids rather than detecting D-amino acids in the active site. By recycling D-aminoacyl-tRNA to D-amino acids and free tRNA molecules, this enzyme counteracts the toxicity associated with the formation of D-aminoacyl-tRNA entities in vivo and helps enforce protein L-homochirality. This is D-aminoacyl-tRNA deacylase from Shewanella loihica (strain ATCC BAA-1088 / PV-4).